The sequence spans 289 residues: DNA repair protein rad14 (289 aa).

The Zn(2+) site is built by Cys-116, Cys-119, Cys-137, and Cys-140. Residues 116–140 fold into a zinc finger; it reads CFECDSIELDTKYFDIFHCRVCHTC.

Belongs to the XPA family. In terms of assembly, interacts with hrq1.

The protein localises to the nucleus. Functionally, involved in nucleotide excision repair (NER). Functional in repair of ultraviolet radiation induced damages and in mitotic mutation avoidance. Binds damaged DNA. Binds specifically to base-base mismatches or small insertion/deletion loops with unpaired nucleotides. Maintains GT repeat stability. Functions as a part of the short-patch excision repair system. This chain is DNA repair protein rad14, found in Schizosaccharomyces pombe (strain 972 / ATCC 24843) (Fission yeast).